Here is a 658-residue protein sequence, read N- to C-terminus: Threonine--tRNA ligase (658 aa).

Positions 1–64 (MSFSISLSFP…EQSGQVEIIT (64 aa)) constitute a TGS domain. Residues 246–549 (DHRRLGREMD…LIENFAGHMP (304 aa)) are catalytic. Zn(2+) is bound by residues C343, H394, and H526.

It belongs to the class-II aminoacyl-tRNA synthetase family. Homodimer. Zn(2+) serves as cofactor.

It localises to the cytoplasm. It catalyses the reaction tRNA(Thr) + L-threonine + ATP = L-threonyl-tRNA(Thr) + AMP + diphosphate + H(+). In terms of biological role, catalyzes the attachment of threonine to tRNA(Thr) in a two-step reaction: L-threonine is first activated by ATP to form Thr-AMP and then transferred to the acceptor end of tRNA(Thr). Also edits incorrectly charged L-seryl-tRNA(Thr). This Bartonella bacilliformis (strain ATCC 35685 / KC583 / Herrer 020/F12,63) protein is Threonine--tRNA ligase.